Here is a 912-residue protein sequence, read N- to C-terminus: Effector protein hopAE1 (912 aa).

Over residues 1–13 (MMPSQITRSSHSS) the composition is skewed to polar residues. The tract at residues 1-32 (MMPSQITRSSHSSLPEVAPASGDATGVSEQTP) is disordered.

The protein belongs to the HopW family.

Its subcellular location is the secreted. This chain is Effector protein hopAE1 (hopAE1), found in Pseudomonas savastanoi pv. phaseolicola (strain 1448A / Race 6) (Pseudomonas syringae pv. phaseolicola (strain 1448A / Race 6)).